The chain runs to 986 residues: DNA polymerase I (986 aa).

A 5'-3' exonuclease domain is found at 1 to 303 (MFMSAKSPLL…RTFIDKIQAF (303 aa)). The 3'-5' exonuclease domain maps to 304-592 (HRNFSDNQSP…MEDRGIRIDC (289 aa)). Residues 308 to 327 (SDNQSPVPMGNEADNGEPKK) are disordered. Positions 593–986 (DYLQTLSQQL…HRGSNWMEAK (394 aa)) are polymerase.

This sequence belongs to the DNA polymerase type-A family. Single-chain monomer with multiple functions.

It carries out the reaction DNA(n) + a 2'-deoxyribonucleoside 5'-triphosphate = DNA(n+1) + diphosphate. In addition to polymerase activity, this DNA polymerase exhibits 3'-5' and 5'-3' exonuclease activity. The polypeptide is DNA polymerase I (polA) (Synechocystis sp. (strain ATCC 27184 / PCC 6803 / Kazusa)).